We begin with the raw amino-acid sequence, 408 residues long: Histidine--tRNA ligase (408 aa).

This sequence belongs to the class-II aminoacyl-tRNA synthetase family. In terms of assembly, homodimer.

It is found in the cytoplasm. The enzyme catalyses tRNA(His) + L-histidine + ATP = L-histidyl-tRNA(His) + AMP + diphosphate + H(+). This is Histidine--tRNA ligase from Campylobacter concisus (strain 13826).